The chain runs to 267 residues: Heme-containing CO-sensing transcriptional regulator RcoM 1 (267 aa).

The region spanning 15–86 (RAETFQHKLE…KSRDKLRFLL (72 aa)) is the PAS domain. Heme-binding residues include His-74 and Met-104. Positions 161–266 (IPVYRKNRVI…TAQLKELLGV (106 aa)) constitute an HTH LytTR-type domain.

The cofactor is heme.

The protein localises to the cytoplasm. In terms of biological role, one-component, b-type heme-containing aerobic sensor and transcriptional regulator that responds to CO by activating the expression of the oxidation operon cox. The polypeptide is Heme-containing CO-sensing transcriptional regulator RcoM 1 (rcoM1) (Paraburkholderia xenovorans (strain LB400)).